The primary structure comprises 535 residues: Putative subtilisin-like proteinase 2 (535 aa).

Residues 1-17 (MFFVGVAVLAALQSVWG) form the signal peptide. Positions 221-475 (NWIFRVLQIK…IPRLGCKGRI (255 aa)) constitute a Peptidase S8 domain. Active-site charge relay system residues include aspartate 255 and histidine 277. An intrachain disulfide couples cysteine 369 to cysteine 400. Serine 420 serves as the catalytic Charge relay system. Residues 489 to 509 (IVPLVFVVLITSALLYLLLIG) traverse the membrane as a helical segment.

Belongs to the peptidase S8 family.

The protein localises to the membrane. Its function is as follows. May be involved in the degradation of proteins for nutrient acquisition or possess a regulatory function by proteolytic activation of proproteins. The chain is Putative subtilisin-like proteinase 2 (SPL2) from Encephalitozoon cuniculi (strain GB-M1) (Microsporidian parasite).